Consider the following 292-residue polypeptide: Elongation factor Ts (292 aa).

An involved in Mg(2+) ion dislocation from EF-Tu region spans residues 80–83 (TDFV).

This sequence belongs to the EF-Ts family.

Its subcellular location is the cytoplasm. Its function is as follows. Associates with the EF-Tu.GDP complex and induces the exchange of GDP to GTP. It remains bound to the aminoacyl-tRNA.EF-Tu.GTP complex up to the GTP hydrolysis stage on the ribosome. This Limosilactobacillus fermentum (strain NBRC 3956 / LMG 18251) (Lactobacillus fermentum) protein is Elongation factor Ts.